Consider the following 654-residue polypeptide: Broad substrate specificity ATP-binding cassette transporter ABCG2 (654 aa).

The Cytoplasmic segment spans residues 1–394 (MSSSNVEVFI…KNLLGNPQAS (394 aa)). The region spanning 37–286 (LSFHNICYRV…FESAGYHCEA (250 aa)) is the ABC transporter domain. Residues 80–87 (GPTGGGKS), 184–190 (RGVSGGE), Glu-211, and His-243 each bind ATP. The ABC transmembrane type-2 domain maps to 388–650 (LGNPQASIAQ…TIAYLKLLFL (263 aa)). The helical transmembrane segment at 395–415 (IAQIIVTVILGLVIGAIYFGL) threads the bilayer. The Extracellular portion of the chain corresponds to 416-427 (NNDSTGIQNRAG). An N-linked (GlcNAc...) asparagine glycan is attached at Asn-417. A helical transmembrane segment spans residues 428–448 (VLFFLTTNQCFSSVSAVELFV). The Cytoplasmic portion of the chain corresponds to 449–476 (VEKKLFIHEYISGYYRVSSYFFGKLLSD). Residues 477 to 497 (LLPMRMLPSIIFTCIVYFMLG) traverse the membrane as a helical segment. Topologically, residues 498 to 505 (LKPTADAF) are extracellular. Residues 506–526 (FIMMFTLMMVAYSASSMALAI) traverse the membrane as a helical segment. Residues 527 to 534 (AAGQSVVS) lie on the Cytoplasmic side of the membrane. The chain crosses the membrane as a helical span at residues 535–555 (VATLLMTICFVFMMIFSGLLV). N-linked (GlcNAc...) asparagine glycans are attached at residues Asn-556, Asn-595, and Asn-599. At 556–629 (NLTTIASWLS…LSPWGLWKNH (74 aa)) the chain is on the extracellular side. Cys-591 and Cys-607 are joined by a disulfide. A helical transmembrane segment spans residues 630–650 (VALACMIVIFLTIAYLKLLFL). Topologically, residues 651 to 654 (KKYS) are cytoplasmic.

Belongs to the ABC transporter superfamily. ABCG family. Eye pigment precursor importer (TC 3.A.1.204) subfamily. In terms of assembly, homodimer; disulfide-linked. The minimal functional unit is a homodimer, but the major oligomeric form in plasma membrane is a homotetramer with possibility of higher order oligomerization up to homododecamers. Post-translationally, N-glycosylated. Glycosylation-deficient ABCG2 is normally expressed and functional. Phosphorylated. Phosphorylation may regulate the localization to the plasma membrane, the homooligomerization and therefore, the activity of the transporter.

Its subcellular location is the cell membrane. The protein resides in the apical cell membrane. The protein localises to the mitochondrion membrane. It carries out the reaction ATP + H2O + xenobioticSide 1 = ADP + phosphate + xenobioticSide 2.. The enzyme catalyses urate(in) + ATP + H2O = urate(out) + ADP + phosphate + H(+). The catalysed reaction is indoxyl sulfate(in) + ATP + H2O = indoxyl sulfate(out) + ADP + phosphate + H(+). It catalyses the reaction sphing-4-enine 1-phosphate(in) + ATP + H2O = sphing-4-enine 1-phosphate(out) + ADP + phosphate + H(+). It carries out the reaction estrone 3-sulfate(in) + ATP + H2O = estrone 3-sulfate(out) + ADP + phosphate + H(+). The enzyme catalyses dehydroepiandrosterone 3-sulfate(in) + ATP + H2O = dehydroepiandrosterone 3-sulfate(out) + ADP + phosphate + H(+). The catalysed reaction is 4-methylumbelliferone sulfate(in) + ATP + H2O = 4-methylumbelliferone sulfate(out) + ADP + phosphate + H(+). It catalyses the reaction 5,7-dimethyl-2-methylamino-4-(3-pyridylmethyl)-1,3-benzothiazol-6-yl beta-D-glucuronate(in) + ATP + H2O = 5,7-dimethyl-2-methylamino-4-(3-pyridylmethyl)-1,3-benzothiazol-6-yl beta-D-glucuronate(out) + ADP + phosphate + H(+). It carries out the reaction 4-methylumbelliferone beta-D-glucuronate(in) + ATP + H2O = 4-methylumbelliferone beta-D-glucuronate(out) + ADP + phosphate + H(+). The enzyme catalyses 5,7-dimethyl-2-methylamino-4-(3-pyridylmethyl)-1,3-benzothiazol-6-yl sulfate(in) + ATP + H2O = 5,7-dimethyl-2-methylamino-4-(3-pyridylmethyl)-1,3-benzothiazol-6-yl sulfate(out) + ADP + phosphate + H(+). The catalysed reaction is 17beta-estradiol 17-O-(beta-D-glucuronate)(in) + ATP + H2O = 17beta-estradiol 17-O-(beta-D-glucuronate)(out) + ADP + phosphate + H(+). It catalyses the reaction methotrexate(in) + ATP + H2O = methotrexate(out) + ADP + phosphate + H(+). It carries out the reaction riboflavin(in) + ATP + H2O = riboflavin(out) + ADP + phosphate + H(+). The enzyme catalyses pheophorbide a(in) + ATP + H2O = pheophorbide a(out) + ADP + phosphate + H(+). The catalysed reaction is itaconate(in) + ATP + H2O = itaconate(out) + ADP + phosphate + H(+). Broad substrate specificity ATP-dependent transporter of the ATP-binding cassette (ABC) family that actively extrudes a wide variety of physiological compounds, dietary toxins and xenobiotics from cells. Involved in porphyrin homeostasis, mediating the export of protoporphyrin IX (PPIX) from both mitochondria to cytosol and cytosol to extracellular space, it also functions in the cellular export of heme. Also mediates the efflux of sphingosine-1-P from cells. Acts as a urate exporter functioning in both renal and extrarenal urate excretion. In kidney, it also functions as a physiological exporter of the uremic toxin indoxyl sulfate. Also involved in the excretion of steroids like estrone 3-sulfate/E1S, 3beta-sulfooxy-androst-5-en-17-one/DHEAS, and other sulfate conjugates. Mediates the secretion of the riboflavin and biotin vitamins into milk. Extrudes pheophorbide a, a phototoxic porphyrin catabolite of chlorophyll, reducing its bioavailability. Plays an important role in the exclusion of xenobiotics from the brain. It confers to cells a resistance to multiple drugs and other xenobiotics including mitoxantrone, pheophorbide, camptothecin, methotrexate, azidothymidine, and the anthracyclines daunorubicin and doxorubicin, through the control of their efflux. In placenta, it limits the penetration of drugs from the maternal plasma into the fetus. May play a role in early stem cell self-renewal by blocking differentiation. In inflammatory macrophages, exports itaconate from the cytosol to the extracellular compartment and limits the activation of TFEB-dependent lysosome biogenesis involved in antibacterial innate immune response. In Macaca mulatta (Rhesus macaque), this protein is Broad substrate specificity ATP-binding cassette transporter ABCG2 (ABCG2).